A 177-amino-acid polypeptide reads, in one-letter code: Inorganic pyrophosphatase (177 aa).

The substrate site is built by Lys30, Arg44, and Tyr56. Positions 66, 71, and 103 each coordinate Mg(2+). Tyr142 serves as a coordination point for substrate.

The protein belongs to the PPase family. In terms of assembly, homohexamer. It depends on Mg(2+) as a cofactor.

Its subcellular location is the cytoplasm. The catalysed reaction is diphosphate + H2O = 2 phosphate + H(+). In terms of biological role, catalyzes the hydrolysis of inorganic pyrophosphate (PPi) forming two phosphate ions. The chain is Inorganic pyrophosphatase from Caulobacter vibrioides (strain ATCC 19089 / CIP 103742 / CB 15) (Caulobacter crescentus).